Consider the following 217-residue polypeptide: Adenylate kinase (217 aa).

10-15 (GAGKGT) contacts ATP. Positions 30-59 (STGDMLRAAVKAGTPLGLEAKKVMDSGGLV) are NMP. AMP is bound by residues T31, R36, 57–59 (GLV), 85–88 (GFPR), and Q92. An LID region spans residues 122-159 (GRRVHVASGRTYHVKFNPPKVAGVDDVTGEPLIQRDDD). Residues R123 and 132 to 133 (TY) each bind ATP. AMP is bound by residues R156 and R167. G203 serves as a coordination point for ATP.

It belongs to the adenylate kinase family. Monomer.

It localises to the cytoplasm. It carries out the reaction AMP + ATP = 2 ADP. Its pathway is purine metabolism; AMP biosynthesis via salvage pathway; AMP from ADP: step 1/1. Functionally, catalyzes the reversible transfer of the terminal phosphate group between ATP and AMP. Plays an important role in cellular energy homeostasis and in adenine nucleotide metabolism. The protein is Adenylate kinase of Methylibium petroleiphilum (strain ATCC BAA-1232 / LMG 22953 / PM1).